The primary structure comprises 436 residues: Gamma-glutamyl phosphate reductase (436 aa).

It belongs to the gamma-glutamyl phosphate reductase family.

The protein localises to the cytoplasm. The enzyme catalyses L-glutamate 5-semialdehyde + phosphate + NADP(+) = L-glutamyl 5-phosphate + NADPH + H(+). It functions in the pathway amino-acid biosynthesis; L-proline biosynthesis; L-glutamate 5-semialdehyde from L-glutamate: step 2/2. Functionally, catalyzes the NADPH-dependent reduction of L-glutamate 5-phosphate into L-glutamate 5-semialdehyde and phosphate. The product spontaneously undergoes cyclization to form 1-pyrroline-5-carboxylate. This Prochlorococcus marinus (strain MIT 9312) protein is Gamma-glutamyl phosphate reductase.